Here is a 321-residue protein sequence, read N- to C-terminus: uncharacterized protein (321 aa).

Residues 130–314 (NLVYDLETTG…NDVDALIKIM (185 aa)) form the Exonuclease domain.

This is an uncharacterized protein from Acanthamoeba polyphaga (Amoeba).